A 321-amino-acid chain; its full sequence is Calcium-binding protein LPS1-alpha (321 aa).

EF-hand domains follow at residues 15-49 (DAIE…NWTE), 47-82 (WTEE…STKE), 85-120 (YSSD…IYTK), 121-156 (VVDG…KLPI), 165-200 (EYRE…STKY), 200-233 (YSDK…DGVS), 232-267 (VSKD…IYRQ), and 269-304 (VDFE…NCPY). Aspartate 29, asparagine 31, aspartate 33, threonine 35, glutamate 40, aspartate 60, asparagine 62, aspartate 64, histidine 66, glutamate 71, aspartate 98, aspartate 100, asparagine 102, arginine 104, glutamate 109, aspartate 134, aspartate 136, aspartate 138, histidine 140, glutamate 145, aspartate 178, asparagine 180, aspartate 182, serine 184, glutamate 189, aspartate 213, asparagine 215, aspartate 217, arginine 219, glutamate 224, aspartate 245, aspartate 247, asparagine 249, lysine 251, glutamate 256, aspartate 284, aspartate 286, tyrosine 288, and glutamate 293 together coordinate Ca(2+).

Aboral ectoderm, a squamous epithelium covering the surface of the late stage embryo and larva.

Functionally, calcium-binding protein involved in larval development and metamorphosis. Likely to function as calcium buffers mediating the transport of calcium from the sea water to the blastocoel where calcium is required for skeleton formation. The sequence is that of Calcium-binding protein LPS1-alpha from Lytechinus pictus (Painted sea urchin).